A 1597-amino-acid chain; its full sequence is Transmembrane protein 131-like (1597 aa).

The N-terminal stretch at 1–40 (MAGLRRPQSGAYRRTAAAVNLLLGVFQVLLSCCRPGGAQG) is a signal peptide. Topologically, residues 41–869 (QAFEPLPNVV…VVPGPSWEES (829 aa)) are extracellular. N-linked (GlcNAc...) asparagine glycans are attached at residues Asn343, Asn593, Asn709, and Asn846. A required for Wnt-signaling inhibition and LRP6 degradation region spans residues 696 to 916 (DYGKVTSLIL…QNGSSSSQQN (221 aa)). Residues 870–890 (FWRLTVFFVSLSLLGVILIAF) traverse the membrane as a helical segment. Residues 891–1597 (QQAQYILMEF…SRDSSYCGNM (707 aa)) are Cytoplasmic-facing. Low complexity predominate over residues 907-917 (QNGSSSSQQNG). Disordered regions lie at residues 907-928 (QNGSSSSQQNGDPVAMISSHPH), 1096-1240 (AELK…EQRL), and 1252-1322 (DGAG…SDCD). Positions 1213 to 1222 (RPCRRNKKRA) are enriched in basic residues. Positions 1223-1239 (SAQASSSPRPSEQSEQR) are enriched in low complexity. The span at 1269–1290 (PERREEDSYYQKSEKKCADKFC) shows a compositional bias: basic and acidic residues. Residues 1291 to 1319 (SDSSSDCGSSSGSVRASRGSWGSWSSSSS) are compositionally biased toward low complexity.

The protein belongs to the TMEM131 family.

It is found in the cell membrane. Its subcellular location is the endoplasmic reticulum. The protein resides in the cytoplasm. Functionally, in its membrane-associated form, antagonizes canonical Wnt signaling by triggering lysosome-dependent degradation of Wnt-activated LRP6. Regulates thymocyte proliferation. The chain is Transmembrane protein 131-like from Mus musculus (Mouse).